Here is a 225-residue protein sequence, read N- to C-terminus: Riboflavin kinase (225 aa).

The unknown stretch occupies residues 1-89; it reads MPDIEYLKKL…SRIFSSEPDT (89 aa). A riboflavin kinase region spans residues 90–225; that stretch reads LELEGNVLKG…LKKQGMEGQK (136 aa). Position 99–104 (99–104) interacts with CDP; that stretch reads GLGEGQ. The Mg(2+) site is built by T128 and N130. 2 residues coordinate FMN: T185 and E193. Residue 198–201 participates in CDP binding; that stretch reads VKLR.

This sequence belongs to the archaeal riboflavin kinase family. The cofactor is Mg(2+).

It carries out the reaction riboflavin + CTP = CDP + FMN + H(+). It functions in the pathway cofactor biosynthesis; FMN biosynthesis; FMN from riboflavin (CTP route): step 1/1. Functionally, catalyzes the CTP-dependent phosphorylation of riboflavin (vitamin B2) to form flavin mononucleotide (FMN). The sequence is that of Riboflavin kinase (ribK) from Methanosarcina mazei (strain ATCC BAA-159 / DSM 3647 / Goe1 / Go1 / JCM 11833 / OCM 88) (Methanosarcina frisia).